We begin with the raw amino-acid sequence, 193 residues long: Surfactant protein C (193 aa).

Residues 1-23 (MDMSSKEVLMESPPDYSAGPRSQ) constitute a propeptide that is removed on maturation. 2 S-palmitoyl cysteine lipidation sites follow: C28 and C29. A propeptide spanning residues 59-193 (HMSQKHTEMV…LCGELPLYYI (135 aa)) is cleaved from the precursor. A BRICHOS domain is found at 94-193 (FSIGSTGIVV…LCGELPLYYI (100 aa)). C121 and C185 form a disulfide bridge. A disordered region spans residues 147-170 (KPSTPTSKLGQEEGHDTGSESDSS).

It is found in the secreted. The protein localises to the extracellular space. Its subcellular location is the surface film. Functionally, pulmonary surfactant associated proteins promote alveolar stability by lowering the surface tension at the air-liquid interface in the peripheral air spaces. The chain is Surfactant protein C from Mus musculus (Mouse).